Reading from the N-terminus, the 179-residue chain is uncharacterized protein (179 aa).

Composition is skewed to polar residues over residues 1–37 (PLGAATSNIPPQYARSTLQPTGLTSRAQSYPTNTNPG) and 60–70 (IPTQSTTTFRS). Disordered regions lie at residues 1 to 41 (PLGA…PSAK) and 60 to 82 (IPTQSTTTFRSNPPLPPVVPGRR).

In terms of tissue distribution, component of the acid-soluble and acid-insoluble organic matrix of calcified shell layers (at protein level).

It is found in the secreted. This is an uncharacterized protein from Haliotis asinina (Donkey's ear abalone).